Here is a 1065-residue protein sequence, read N- to C-terminus: Ceruloplasmin (1065 aa).

The first 19 residues, methionine 1 to alanine 19, serve as a signal peptide directing secretion. 2 Plastocyanin-like domains span residues lysine 20–cysteine 200 and lysine 209–cysteine 357. Residues tyrosine 55, glycine 64, and tyrosine 67 each coordinate Na(+). Histidine 120 and histidine 122 together coordinate Cu(2+). Histidine 120 lines the O2 pocket. Position 128 (lysine 128) interacts with Ca(2+). Residue asparagine 138 is glycosylated (N-linked (GlcNAc...) (complex) asparagine). Glutamine 143, aspartate 146, and aspartate 147 together coordinate Ca(2+). A disulfide bond links cysteine 174 and cysteine 200. 2 residues coordinate Cu(2+): histidine 180 and histidine 182. Histidine 180 provides a ligand contact to O2. Serine 256 contacts Na(+). A disulfide bond links cysteine 276 and cysteine 357. 3 residues coordinate Cu(2+): histidine 295, cysteine 338, and histidine 343. Residues asparagine 358 and asparagine 397 are each glycosylated (N-linked (GlcNAc...) (complex) asparagine). 2 Plastocyanin-like domains span residues histidine 370–cysteine 560 and arginine 570–cysteine 718. Na(+) is bound by residues phenylalanine 408, glycine 417, and tyrosine 420. Residues cysteine 534 and cysteine 560 are joined by a disulfide bond. N-linked (GlcNAc...) asparagine glycosylation is present at asparagine 588. Na(+) is bound at residue serine 617. A disulfide bond links cysteine 637 and cysteine 718. Cu(2+) contacts are provided by histidine 656, cysteine 699, histidine 704, and methionine 709. Cysteine 699 (nucleophile; for glutathione peroxidase activity) is an active-site residue. Serine 722 is subject to Phosphoserine; by FAM20C. 2 consecutive Plastocyanin-like domains span residues glycine 730 to cysteine 900 and phenylalanine 908 to aspartate 1061. A glycan (N-linked (GlcNAc...) (complex) asparagine) is linked at asparagine 762. Residues phenylalanine 767, glycine 776, and tyrosine 779 each coordinate Na(+). A disulfide bridge links cysteine 874 with cysteine 900. An N-linked (GlcNAc...) asparagine glycan is attached at asparagine 926. Serine 955 serves as a coordination point for Na(+). Positions 994, 997, 999, 1039, 1040, 1041, 1045, and 1050 each coordinate Cu(2+). O2 contacts are provided by histidine 997 and histidine 999. Histidine 1041 contributes to the O2 binding site.

This sequence belongs to the multicopper oxidase family. As to quaternary structure, found in a complex with MPO and LTF; interacts directly with MPO and LTF, which allows Fe(3+) incorporation into LTF, activation of CP ferroxidase activity and protection of CP antioxidant properties by MPO. Requires Cu(2+) as cofactor. In terms of tissue distribution, expressed by the liver and secreted in plasma.

Its subcellular location is the secreted. The enzyme catalyses 4 Fe(2+) + O2 + 4 H(+) = 4 Fe(3+) + 2 H2O. It carries out the reaction 4 Cu(+) + O2 + 4 H(+) = 4 Cu(2+) + 2 H2O. It catalyses the reaction a hydroperoxide + 2 glutathione = an alcohol + glutathione disulfide + H2O. The catalysed reaction is 4 nitric oxide + O2 + 2 H2O = 4 nitrite + 4 H(+). The enzyme catalyses 2 glutathione + H2O2 = glutathione disulfide + 2 H2O. Functionally, multifunctional blue, copper-binding (6-7 atoms per molecule) glycoprotein. It has ferroxidase activity oxidizing Fe(2+) to Fe(3+) without releasing radical oxygen species. It is involved in iron transport across the cell membrane. Copper ions provide a large number of enzymatic activites. Oxidizes highly toxic ferrous ions to the ferric state for further incorporation onto apo-transferrins, catalyzes Cu(+) oxidation and promotes the oxidation of biogenic amines such as norepinephrin and serotonin. Provides Cu(2+) ions for the ascorbate-mediated deaminase degradation of the heparan sulfate chains of GPC1. Has glutathione peroxidase-like activity, can remove both hydrogen peroxide and lipid hydroperoxide in the presence of thiols. Also shows NO-oxidase and NO2 synthase activities that determine endocrine NO homeostasis. The sequence is that of Ceruloplasmin from Homo sapiens (Human).